Reading from the N-terminus, the 363-residue chain is MGAATETFYSVIRRQGITRRSFHKFCSLTATSLGLGPLAASRIANALETKPRVPVIWMHGLECTCCSESFIRSAHPLVKDAVLSMISLDYDDTIMAAAGHQAEAILEETRAKHKGQYILAVEGNPPLNEGGMFCIDGGKPFVEKLKMMAEDAMAIIAWGACASWGCVQAAKPNPTQATPIDKVITNKPIIKVPGCPPIAEVMTGVVTFITTFGKLPELDRQGRPKMFYSQRIHDKCYRRPHFDAGQFVEEWDDEAARKGYCLYKMGCKGPTTYNACSTVRWNGGVSFPIQSGHGCIGCSEDGFWDKGSFYDRLTNIKQFGIEKNADQIGMVAAGAVGAAVAAHAAVTAVKRLATKREDADHNS.

The tat-type signal signal peptide spans 1 to 46; sequence MGAATETFYSVIRRQGITRRSFHKFCSLTATSLGLGPLAASRIANA. [4Fe-4S] cluster contacts are provided by C63, C66, C161, C195, H233, C236, C261, and C267. [3Fe-4S] cluster-binding residues include C276, C295, and C298.

The protein belongs to the [NiFe]/[NiFeSe] hydrogenase small subunit family. As to quaternary structure, heterodimer of a large and a small subunit. The cofactor is [4Fe-4S] cluster. [3Fe-4S] cluster is required as a cofactor. Post-translationally, predicted to be exported by the Tat system. The position of the signal peptide cleavage has not been experimentally proven.

It is found in the cell membrane. It catalyses the reaction H2 + A = AH2. This enzyme recycles the H(2) produced by nitrogenase to increase the production of ATP and to protect nitrogenase against inhibition or damage by O(2) under carbon- or phosphate-limited conditions. This Bradyrhizobium diazoefficiens (strain JCM 10833 / BCRC 13528 / IAM 13628 / NBRC 14792 / USDA 110) protein is Uptake hydrogenase small subunit (hupA).